A 151-amino-acid polypeptide reads, in one-letter code: Ribosome maturation factor RimP (151 aa).

The protein belongs to the RimP family.

Its subcellular location is the cytoplasm. Its function is as follows. Required for maturation of 30S ribosomal subunits. The polypeptide is Ribosome maturation factor RimP (Shewanella baltica (strain OS223)).